We begin with the raw amino-acid sequence, 220 residues long: uncharacterized protein (220 aa).

A coiled-coil region spans residues 165-202 (DKYEDLISDYNKIMEKYREVIKSEIEKYKALSKRKNDI).

This is an uncharacterized protein from Pasteurella multocida (strain Pm70).